Here is an 854-residue protein sequence, read N- to C-terminus: Discoidin domain-containing receptor 2 (854 aa).

The first 21 residues, 1–21, serve as a signal peptide directing secretion; that stretch reads MIPIPRMPLVLLLLLLILGSA. The Extracellular segment spans residues 22 to 399; the sequence is KAQVNPAICR…MLKVDDSNTR (378 aa). The 156-residue stretch at 30–185 folds into the F5/8 type C domain; that stretch reads CRYPLGMSGG…VCMRVELYGC (156 aa). Intrachain disulfides connect Cys-30–Cys-185 and Cys-73–Cys-177. N-linked (GlcNAc...) asparagine glycans are attached at residues Asn-121, Asn-213, Asn-261, Asn-280, and Asn-372. The chain crosses the membrane as a helical span at residues 400–421; it reads ILIGCLVAIIFILLAIIVIILW. Residues 422-854 are Cytoplasmic-facing; sequence RQFWQKMLEK…HLLLLQQGAE (433 aa). The interval 452–471 is disordered; sequence SMFNNNRSSSPSEQESNSTY. Residues 455–469 are compositionally biased toward low complexity; sequence NNNRSSSPSEQESNS. Tyr-471 bears the Phosphotyrosine; by SRC and autocatalysis mark. A Protein kinase domain is found at 563-848; sequence LAFKEKLGEG…PSFQEIHLLL (286 aa). Residues 569-577 and Lys-608 contribute to the ATP site; that span reads LGEGQFGEV. The Proton acceptor role is filled by Asp-709. Phosphotyrosine; by SRC and autocatalysis is present on residues Tyr-735, Tyr-739, and Tyr-740.

This sequence belongs to the protein kinase superfamily. Tyr protein kinase family. Insulin receptor subfamily. Binds hydroxyproline-rich sequence motifs in fibrillar, glycosylated collagen, such as the GQOGVMGFO motif, where O stands for hydroxyproline. Interacts with SRC. Interacts (tyrosine phosphorylated) with SHC1. Post-translationally, N-glycosylated. In terms of processing, tyrosine phosphorylated in response to collagen binding. Phosphorylated by SRC; this is required for activation and subsequent autophosphorylation on additional tyrosine residues. As to expression, widely expressed. Detected in lung, ovary, skin and in testis Leydig cells (at protein level). Widely expressed. Detected at high levels in heart, lung, skeletal muscle, central nervous system (CNS) and kidney, and at lower levels in brain and testis. Detected in chondrocytes in tibia growth plates of young mice.

It localises to the cell membrane. The enzyme catalyses L-tyrosyl-[protein] + ATP = O-phospho-L-tyrosyl-[protein] + ADP + H(+). Present in an inactive state in the absence of collagen binding and phosphorylation by SRC. Tyrosine phosphorylation enhances the affinity for ATP and the catalytic activity. In terms of biological role, tyrosine kinase that functions as a cell surface receptor for fibrillar collagen and regulates cell differentiation, remodeling of the extracellular matrix, cell migration and cell proliferation. Required for normal bone development. Regulates osteoblast differentiation and chondrocyte maturation via a signaling pathway that involves MAP kinases and leads to the activation of the transcription factor RUNX2. Regulates remodeling of the extracellular matrix by up-regulation of the collagenases MMP1, MMP2 and MMP13, and thereby facilitates cell migration and tumor cell invasion. Promotes fibroblast migration and proliferation, and thereby contributes to cutaneous wound healing. This Mus musculus (Mouse) protein is Discoidin domain-containing receptor 2 (Ddr2).